The following is a 2531-amino-acid chain: Mediator of RNA polymerase II transcription subunit 12 (2531 aa).

4 disordered regions span residues 1-41 (MLSM…VKHG), 204-283 (QNHD…GSVM), 584-604 (VSRRREEDQVEPRPPYEPKQD), and 742-762 (TTATKTSPPPPAPPPTTTHGF). Over residues 210–247 (SSNGTTSGSLTAAGNGPASNGSTGTSSINSVTGSSAST) the composition is skewed to low complexity. Residues 586–604 (RRREEDQVEPRPPYEPKQD) show a composition bias toward basic and acidic residues. Thr-745 carries the post-translational modification Phosphothreonine. A phosphoserine mark is found at Ser-748 and Ser-781. Over residues 748–757 (SPPPPAPPPT) the composition is skewed to pro residues. Positions 796 to 805 (EKGQQHEAPD) are enriched in basic and acidic residues. The interval 796–824 (EKGQQHEAPDSPKIGPPGDGETNPGGSIS) is disordered. Residues Ser-806 and Ser-1356 each carry the phosphoserine modification. Residue Thr-1360 is modified to Phosphothreonine. Composition is skewed to polar residues over residues 1585 to 1595 (VSKSDCNSSGS) and 1901 to 1910 (TPSSVDQSPS). 4 disordered regions span residues 1585–1608 (VSKSDCNSSGSGDEREKSNSCHSS), 1898–2092 (KADT…NQYA), 2114–2218 (QALS…GMAP), and 2469–2508 (MGGGAGGGMGAGPQQGGGAVGGGAGGGMVPQQQSMNQQQT). Basic residues predominate over residues 1919–1933 (GRGKGTTTRKRKPKN). 2 stretches are compositionally biased toward low complexity: residues 1938-2038 (PVVN…QQLN) and 2045-2055 (QPNPQMNFMQQ). The segment covering 2056–2066 (GPGGGGAGPQG) has biased composition (gly residues). 3 stretches are compositionally biased toward low complexity: residues 2067-2080 (MPGQQQQWHNAPQQ), 2121-2132 (RQRQPFQQQAQQ), and 2139-2205 (NPMQ…QQQQ). Gly residues predominate over residues 2469 to 2496 (MGGGAGGGMGAGPQQGGGAVGGGAGGGM). The span at 2497-2507 (VPQQQSMNQQQ) shows a compositional bias: low complexity.

The protein belongs to the Mediator complex subunit 12 family. In terms of assembly, component of the Cdk8 module of the Mediator complex, composed of CycC, Cdk8, kto and skd.

The protein localises to the nucleus. Its function is as follows. Component of the Mediator complex, a coactivator involved in regulated gene transcription of nearly all RNA polymerase II-dependent genes. Mediator functions as a bridge to convey information from gene-specific regulatory proteins to the basal RNA polymerase II transcription machinery. Mediator is recruited to promoters by direct interactions with regulatory proteins and serves as a scaffold for the assembly of a functional preinitiation complex with RNA polymerase II and the general transcription factors. Required for leg and eye development and macrochaete specification or differentiation. The protein is Mediator of RNA polymerase II transcription subunit 12 (kto) of Drosophila melanogaster (Fruit fly).